The sequence spans 365 residues: DNA replication and repair protein RecF (365 aa).

30 to 37 (GDNGEGKT) serves as a coordination point for ATP.

Belongs to the RecF family.

The protein resides in the cytoplasm. Its function is as follows. The RecF protein is involved in DNA metabolism; it is required for DNA replication and normal SOS inducibility. RecF binds preferentially to single-stranded, linear DNA. It also seems to bind ATP. The sequence is that of DNA replication and repair protein RecF from Leptospira borgpetersenii serovar Hardjo-bovis (strain JB197).